Here is a 156-residue protein sequence, read N- to C-terminus: Ribosomal RNA large subunit methyltransferase H (156 aa).

S-adenosyl-L-methionine contacts are provided by residues L73, G104, and 123–128 (LSPLTL).

This sequence belongs to the RNA methyltransferase RlmH family. In terms of assembly, homodimer.

The protein resides in the cytoplasm. The catalysed reaction is pseudouridine(1915) in 23S rRNA + S-adenosyl-L-methionine = N(3)-methylpseudouridine(1915) in 23S rRNA + S-adenosyl-L-homocysteine + H(+). Specifically methylates the pseudouridine at position 1915 (m3Psi1915) in 23S rRNA. This is Ribosomal RNA large subunit methyltransferase H from Hahella chejuensis (strain KCTC 2396).